The following is a 116-amino-acid chain: Nucleoid-associated protein SACE_0254 (116 aa).

Positions 90 to 116 (LQQEKMGPVTGALGGGQGLGGLGLPGL) are disordered. Gly residues predominate over residues 101–116 (ALGGGQGLGGLGLPGL).

This sequence belongs to the YbaB/EbfC family. As to quaternary structure, homodimer.

It is found in the cytoplasm. Its subcellular location is the nucleoid. In terms of biological role, binds to DNA and alters its conformation. May be involved in regulation of gene expression, nucleoid organization and DNA protection. The protein is Nucleoid-associated protein SACE_0254 of Saccharopolyspora erythraea (strain ATCC 11635 / DSM 40517 / JCM 4748 / NBRC 13426 / NCIMB 8594 / NRRL 2338).